The primary structure comprises 304 residues: GTPase Era (304 aa).

One can recognise an Era-type G domain in the interval 11 to 179 (YCGFIAIVGR…QKIVRKSLRE (169 aa)). Residues 19 to 26 (GRPNVGKS) form a G1 region. 19–26 (GRPNVGKS) contacts GTP. Positions 45–49 (QTTRH) are G2. The segment at 66–69 (DTPG) is G3. Residues 66-70 (DTPGL) and 128-131 (NKVD) contribute to the GTP site. Residues 128–131 (NKVD) are G4. Residues 158–160 (ISA) are G5. In terms of domain architecture, KH type-2 spans 210 to 287 (TGEELPYSVT…HLELWVKVKA (78 aa)).

It belongs to the TRAFAC class TrmE-Era-EngA-EngB-Septin-like GTPase superfamily. Era GTPase family. Monomer.

The protein localises to the cytoplasm. Its subcellular location is the cell inner membrane. Its function is as follows. An essential GTPase that binds both GDP and GTP, with rapid nucleotide exchange. Plays a role in 16S rRNA processing and 30S ribosomal subunit biogenesis and possibly also in cell cycle regulation and energy metabolism. The polypeptide is GTPase Era (Actinobacillus pleuropneumoniae serotype 5b (strain L20)).